The primary structure comprises 166 residues: Ubiquitin-fold modifier-conjugating enzyme 1 (166 aa).

The active-site Glycyl thioester intermediate is C116.

The protein belongs to the ubiquitin-conjugating enzyme family. UFC1 subfamily.

Functionally, E2-like enzyme which forms an intermediate with UFM1 via a thioester linkage. In Monosiga brevicollis (Choanoflagellate), this protein is Ubiquitin-fold modifier-conjugating enzyme 1.